The primary structure comprises 1807 residues: Triacetic acid lactone synthase cle1 (1807 aa).

The Starter acyltransferase (SAT) domain maps to 107–280; sequence LAPLTVIIHI…ANVPVNGRYH (174 aa). The 411-residue stretch at 385 to 795 folds into the Ketosynthase family 3 (KS3) domain; the sequence is DTSIAIIGAA…GNNTAIIICQ (411 aa). Catalysis depends on for beta-ketoacyl synthase activity residues Cys-540, His-675, and His-718. Residues 919–1176 form the Malonyl-CoA:ACP transacylase (MAT) domain; that stretch reads SKAVYDSSYH…LGPCIWLEAG (258 aa). Residues 1272–1398 form an N-terminal hotdog fold region; the sequence is PVIDGLISLE…GTVIVDDERT (127 aa). Residues 1272 to 1573 enclose the PKS/mFAS DH domain; sequence PVIDGLISLE…FIRTSTSALQ (302 aa). The Proton acceptor; for dehydratase activity role is filled by His-1304. The tract at residues 1416 to 1573 is C-terminal hotdog fold; that stretch reads TVFSAPRGVA…FIRTSTSALQ (158 aa). The active-site Proton donor; for dehydratase activity is Asp-1475. In terms of domain architecture, Carrier 1 spans 1605–1679; the sequence is ANVWSLTVNL…IICERITAQT (75 aa). Ser-1639 is modified (O-(pantetheine 4'-phosphoryl)serine). The tract at residues 1690 to 1720 is disordered; the sequence is GNSTSNTTSSSSQCTPSSSFESDSDTQATEL. A compositionally biased stretch (low complexity) spans 1692–1710; the sequence is STSNTTSSSSQCTPSSSFE. The Carrier 2 domain occupies 1721–1797; that stretch reads SLSAPTMEKV…DLHALVMRRG (77 aa). Residue Ser-1757 is modified to O-(pantetheine 4'-phosphoryl)serine.

Pantetheine 4'-phosphate is required as a cofactor.

The protein operates within secondary metabolite biosynthesis; terpenoid biosynthesis. Non-reducing polyketide synthase; part of the cluster A that mediates the biosynthesis of chevalone E and its oxidized derivatives that possess a unique five-membered lactone ring and can synergistically enhance the cytotoxicity of doxorubicin (DOX) in breast cancer cells. Within the pathway, cle1 takes part to the biosynthesis of the molecular scaffold via the synthesis the alpha-pyrone triacetic acid lactone (TAL) from one molecule of acetyl-CoA and two molecules of malonyl-CoA. The molecular scaffold is commonly biosynthesized by a series of enzymes including the non-reducing polyketide synthase (NR-PKS) cle1 that produces the alpha-pyrone triacetic acid lactone (TAL); The membrane-bound prenyltransferase cle5 that accepts TAL as its substrate to perform a C-3 geranylgeranylation reaction, in which the pathway-dedicated GGPS cle6 is required to provide GGPP, the other substrate of cle5; the FAD-dependent monooxygenase Cle3 that forms an (S)-epoxide ring at the terminal olefin of the geranylgeranyl group; and the terpene cyclase Cle7 that catalyzes the cyclization of the prenyl group that yields the pentacyclic pathway intermediate chevalone E. Chevalone E can derivatize into seven new oxidized analogs by the cytochrome P450 monooxygenases cle2 (acting at C-20) and cle4 (acting at C-11 and C-12). The protein is Triacetic acid lactone synthase cle1 of Aspergillus versicolor.